Consider the following 182-residue polypeptide: UPF0397 protein SPH_0594 (182 aa).

The next 5 helical transmembrane spans lie at 10-30 (VVAVGIGAALFVVIGMINIPT), 46-66 (LLSIIFGPIIGLLVGVIGHAI), 73-93 (YGLWWTWIIASGLFGLVVGLF), 109-129 (ILIFNLIQLLANALVWGVLAP), and 148-168 (IVAGIANGVSVAIAGTLLLLA).

It belongs to the UPF0397 family.

The protein resides in the cell membrane. This chain is UPF0397 protein SPH_0594, found in Streptococcus pneumoniae (strain Hungary19A-6).